Reading from the N-terminus, the 350-residue chain is Phenylalanine--tRNA ligase alpha subunit (350 aa).

Glu271 contributes to the Mg(2+) binding site.

This sequence belongs to the class-II aminoacyl-tRNA synthetase family. Phe-tRNA synthetase alpha subunit type 1 subfamily. As to quaternary structure, tetramer of two alpha and two beta subunits. It depends on Mg(2+) as a cofactor.

It is found in the cytoplasm. The enzyme catalyses tRNA(Phe) + L-phenylalanine + ATP = L-phenylalanyl-tRNA(Phe) + AMP + diphosphate + H(+). The polypeptide is Phenylalanine--tRNA ligase alpha subunit (Verminephrobacter eiseniae (strain EF01-2)).